A 242-amino-acid polypeptide reads, in one-letter code: Uridylate kinase (242 aa).

Residue 8 to 11 (KFSG) coordinates ATP. UMP is bound at residue glycine 50. Positions 51 and 55 each coordinate ATP. Residues aspartate 71 and 132–139 (TGNPFFTT) each bind UMP. ATP contacts are provided by threonine 159, tyrosine 165, and aspartate 168.

It belongs to the UMP kinase family. In terms of assembly, homohexamer.

The protein resides in the cytoplasm. It carries out the reaction UMP + ATP = UDP + ADP. The protein operates within pyrimidine metabolism; CTP biosynthesis via de novo pathway; UDP from UMP (UMPK route): step 1/1. Inhibited by UTP. In terms of biological role, catalyzes the reversible phosphorylation of UMP to UDP. The chain is Uridylate kinase from Nitratiruptor sp. (strain SB155-2).